The following is an 806-amino-acid chain: Transitional endoplasmic reticulum ATPase (806 aa).

Ser3 carries the post-translational modification Phosphoserine. ATP contacts are provided by residues 247–253, Asn348, His384, and 521–526; these read PGTGKTL and GCGKTL. Disordered regions lie at residues 708 to 727 and 768 to 806; these read RRER…EDDP and FGSF…DLYG. The span at 768–778 shows a compositional bias: low complexity; the sequence is FGSFRFPSSNQ. Positions 779–794 are enriched in gly residues; the sequence is GGSGPSQGSSGGGGGN.

It belongs to the AAA ATPase family. Homohexamer.

The protein resides in the cytoplasm. The protein localises to the cytosol. Its subcellular location is the endoplasmic reticulum. It is found in the nucleus. The enzyme catalyses ATP + H2O = ADP + phosphate + H(+). Functionally, necessary for the fragmentation of Golgi stacks during mitosis and for their reassembly after mitosis. Involved in the formation of the nuclear envelope, and of the transitional endoplasmic reticulum (tER). The transfer of membranes from the endoplasmic reticulum to the Golgi apparatus occurs via 50-70 nm transition vesicles which derive from part-rough, part-smooth transitional elements of the endoplasmic reticulum (tER). Vesicle budding from the tER is an ATP-dependent process. Also involved in DNA damage response: recruited to double-strand breaks (DSBs) sites and promotes the recruitment of tp53bp1 at DNA damage sites. Together with sprtn metalloprotease, involved in the repair of covalent DNA-protein cross-links (DPCs) during DNA synthesis. Involved in interstrand cross-link repair in response to replication stress by mediating unloading of the ubiquitinated CMG helicase complex. Enhances cell cycle progression and inhibits apoptosis at low temperatures. Essential for the maturation of ubiquitin-containing autophagosomes and the clearance of ubiquitinated protein by autophagy. Acts as a negative regulator of type I interferon production by promoting ubiquitination of RIGI. May play a role in the ubiquitin-dependent sorting of membrane proteins to lysosomes where they undergo degradation. May more particularly play a role in caveolins sorting in cells. By controlling the steady-state expression of the IGF1R receptor, indirectly regulates the insulin-like growth factor receptor signaling pathway. The chain is Transitional endoplasmic reticulum ATPase from Danio rerio (Zebrafish).